Consider the following 285-residue polypeptide: Bifunctional protein FolD (285 aa).

Residues 166–168 (GAS), S191, and I232 each bind NADP(+).

The protein belongs to the tetrahydrofolate dehydrogenase/cyclohydrolase family. In terms of assembly, homodimer.

It carries out the reaction (6R)-5,10-methylene-5,6,7,8-tetrahydrofolate + NADP(+) = (6R)-5,10-methenyltetrahydrofolate + NADPH. It catalyses the reaction (6R)-5,10-methenyltetrahydrofolate + H2O = (6R)-10-formyltetrahydrofolate + H(+). It functions in the pathway one-carbon metabolism; tetrahydrofolate interconversion. Functionally, catalyzes the oxidation of 5,10-methylenetetrahydrofolate to 5,10-methenyltetrahydrofolate and then the hydrolysis of 5,10-methenyltetrahydrofolate to 10-formyltetrahydrofolate. The polypeptide is Bifunctional protein FolD (Actinobacillus pleuropneumoniae serotype 7 (strain AP76)).